The following is a 322-amino-acid chain: Solute carrier family 35 member B1 (322 aa).

Transmembrane regions (helical) follow at residues 12 to 32 (LRLPLCFLGVFVCYFYYGILQ), 51 to 71 (FALTLVFIQCVVNAVFAKILI), 85 to 105 (WLYAACSVSYLGAMVSSNSAL), 136 to 156 (YPMAKYLCVLLIVAGVALFMY), 168 to 188 (TIGYGELLLLLSLTLDGLTGV), 210 to 230 (LWSTLLLGAGILFTGELWEFL), 243 to 263 (ILLFGLTSALGQSFIFMTVVY), and 285 to 305 (VILFANPISPMQWVGTVLVFL). Residues 318–322 (KKTSH) carry the Di-lysine motif motif.

It belongs to the nucleotide-sugar transporter family. SLC35B subfamily.

It is found in the endoplasmic reticulum membrane. The catalysed reaction is ADP(in) + ATP(out) = ADP(out) + ATP(in). It catalyses the reaction UDP(out) + ATP(in) = UDP(in) + ATP(out). The enzyme catalyses UTP(out) + ATP(in) = UTP(in) + ATP(out). It carries out the reaction dATP(out) + ATP(in) = dATP(in) + ATP(out). ATP:ADP antiporter that catalyzes the exchange of ATP and ADP across the endoplasmic reticulum (ER) membrane. Imports ATP from the cytosol to the ER lumen and exports ADP in the opposite direction. Regulates ER energy metabolism and protein biogenesis. Appears to be part of a calcium-dependent ER to cytosol low energy response axis, where calcium efflux from ER to the cytosol triggers ATP import into the ER lumen to maintain sufficient ATP supply. Provides ATP to ER chaperone HSPA5 that drives protein folding and trafficking in the ER. Can transport dATP, UTP or UDP in exchange for ATP, but the physiological relevance of this process remains to be established. In Bos taurus (Bovine), this protein is Solute carrier family 35 member B1 (SLC35B1).